A 226-amino-acid polypeptide reads, in one-letter code: Staphylococcal superantigen-like 1 (226 aa).

The signal sequence occupies residues 1–30 (MKFKAIAKASLALGMLATGVITSNVQSVQA).

This sequence belongs to the staphylococcal/streptococcal toxin family. As to quaternary structure, homodimer.

It is found in the secreted. Mediates virulence by proteolytically cleaving host proteins, including collagens types I and IV as well as human cytokines IL8, IL17A, and IFN-gamma. This Staphylococcus aureus (strain NCTC 8325 / PS 47) protein is Staphylococcal superantigen-like 1.